The chain runs to 182 residues: UPF0149 protein CGSHiGG_07585 (182 aa).

It belongs to the UPF0149 family.

The chain is UPF0149 protein CGSHiGG_07585 from Haemophilus influenzae (strain PittGG).